Reading from the N-terminus, the 298-residue chain is GTP cyclohydrolase FolE2 (298 aa).

This sequence belongs to the GTP cyclohydrolase IV family.

It carries out the reaction GTP + H2O = 7,8-dihydroneopterin 3'-triphosphate + formate + H(+). Its pathway is cofactor biosynthesis; 7,8-dihydroneopterin triphosphate biosynthesis; 7,8-dihydroneopterin triphosphate from GTP: step 1/1. In terms of biological role, converts GTP to 7,8-dihydroneopterin triphosphate. This Pseudomonas fluorescens (strain SBW25) protein is GTP cyclohydrolase FolE2.